Here is a 402-residue protein sequence, read N- to C-terminus: Aminotransferase-like protein FGM3 (402 aa).

Residues 137–138, Asp218, and 282–283 contribute to the pyridoxal 5'-phosphate site; these read TI and FG.

This sequence belongs to the class-V pyridoxal-phosphate-dependent aminotransferase family. Csd subfamily.

Functionally, aminotransferase-like protein; part of the Fg3_54/C64 gene cluster that mediates the biosynthesis of the octapeptide fusaoctaxin A, a virulence factor that is required for cell-to-cell invasiveness of plant host. The 2 nonribosomal peptide synthetases NRPS9 and NRPS5 form an assembly line which likely utilizes GABA as a starter unit (loaded on the unique module M1 of NRPS9) and sequentially incorporates seven extender units composed of the residues L-Ala, L-allo-Ile, L-Ser, L-Val, L-Ser, L-Leu and L-Leu, respectively. During the process, each of the residues that are tethered on modules M3-M7 of NRPS5 containing an E domain can undergo an epimerization reaction to produce a D-configuration before the transpeptidation reaction occurs. The elongation of the peptidyl chain might be terminated by module M8-mediated L-Leu incorporation, followed by R domain-catalyzed 4 electron reduction to release the resulting octapeptide from the assembly line as an alcohol. Fusaoctaxin A is cleaved by the cluster specific ABC transporter FGM5 to the pentapeptide fusapentaxin A and the tripeptide fusatrixin A. The other enzymes from the cluster, FGM1, FGM2, FGM3 and FGM9 seem not to be involved in the biosynthesis of fusaoctaxin A and their functions have still to be determined. The sequence is that of Aminotransferase-like protein FGM3 from Gibberella zeae (strain ATCC MYA-4620 / CBS 123657 / FGSC 9075 / NRRL 31084 / PH-1) (Wheat head blight fungus).